The sequence spans 466 residues: Eukaryotic translation initiation factor 3 subunit M (466 aa).

The interval 40-62 (EISPLLEPLRQQEQSDAEPDRKQ) is disordered. One can recognise a PCI domain in the interval 211–378 (AQTHILQALQ…SEFLVHRATY (168 aa)). Residues 424–466 (AAEEAAQGKSNDKGNKSGDRRQRHGNNQQSQQQQQPQEVAAAE) form a disordered region. A compositionally biased stretch (basic and acidic residues) spans 433-443 (SNDKGNKSGDR). The segment covering 451-460 (QQSQQQQQPQ) has biased composition (low complexity).

It belongs to the eIF-3 subunit M family. Component of the eukaryotic translation initiation factor 3 (eIF-3) complex.

It localises to the cytoplasm. Component of the eukaryotic translation initiation factor 3 (eIF-3) complex, which is involved in protein synthesis of a specialized repertoire of mRNAs and, together with other initiation factors, stimulates binding of mRNA and methionyl-tRNAi to the 40S ribosome. The eIF-3 complex specifically targets and initiates translation of a subset of mRNAs involved in cell proliferation. The protein is Eukaryotic translation initiation factor 3 subunit M of Aspergillus oryzae (strain ATCC 42149 / RIB 40) (Yellow koji mold).